A 240-amino-acid chain; its full sequence is FAS1 domain-containing protein AN1527 (240 aa).

The N-terminal stretch at 1-24 (MRQLSTTALVLFLFFYCSISTAWS) is a signal peptide. An FAS1 domain is found at 91 to 239 (EPTISDVLPK…GEVWVIDGVI (149 aa)).

The protein resides in the vacuole. The protein is FAS1 domain-containing protein AN1527 of Emericella nidulans (strain FGSC A4 / ATCC 38163 / CBS 112.46 / NRRL 194 / M139) (Aspergillus nidulans).